The sequence spans 929 residues: Bifunctional uridylyltransferase/uridylyl-removing enzyme (929 aa).

The tract at residues 1-379 (MSPSRPAADE…RPAAKRRRVP (379 aa)) is uridylyltransferase. Residues 380 to 735 (ESDDFVIDNN…VGFDEARAVT (356 aa)) are uridylyl-removing. In terms of domain architecture, HD spans 495-618 (VDEHLIRCVG…VETVEQMKML (124 aa)). ACT domains are found at residues 736–818 (ELTI…AVAR) and 849–929 (VIEV…KPAA).

Belongs to the GlnD family. Mg(2+) serves as cofactor.

It catalyses the reaction [protein-PII]-L-tyrosine + UTP = [protein-PII]-uridylyl-L-tyrosine + diphosphate. It carries out the reaction [protein-PII]-uridylyl-L-tyrosine + H2O = [protein-PII]-L-tyrosine + UMP + H(+). Uridylyltransferase (UTase) activity is inhibited by glutamine, while glutamine activates uridylyl-removing (UR) activity. Functionally, modifies, by uridylylation and deuridylylation, the PII regulatory proteins (GlnB and homologs), in response to the nitrogen status of the cell that GlnD senses through the glutamine level. Under low glutamine levels, catalyzes the conversion of the PII proteins and UTP to PII-UMP and PPi, while under higher glutamine levels, GlnD hydrolyzes PII-UMP to PII and UMP (deuridylylation). Thus, controls uridylylation state and activity of the PII proteins, and plays an important role in the regulation of nitrogen fixation and metabolism. The polypeptide is Bifunctional uridylyltransferase/uridylyl-removing enzyme (Rhodopseudomonas palustris (strain ATCC BAA-98 / CGA009)).